We begin with the raw amino-acid sequence, 393 residues long: Succinate--CoA ligase [ADP-forming] subunit beta (393 aa).

An ATP-grasp domain is found at 9–242 (KELFAKHGVP…RAATDPLEWK (234 aa)). Residues Lys45, 52 to 54 (GRG), Ser94, and Glu99 each bind ATP. Residues Asn191 and Asp211 each coordinate Mg(2+). Substrate contacts are provided by residues Asn262 and 324–326 (GIT).

This sequence belongs to the succinate/malate CoA ligase beta subunit family. Heterotetramer of two alpha and two beta subunits. Mg(2+) is required as a cofactor.

It catalyses the reaction succinate + ATP + CoA = succinyl-CoA + ADP + phosphate. The enzyme catalyses GTP + succinate + CoA = succinyl-CoA + GDP + phosphate. It functions in the pathway carbohydrate metabolism; tricarboxylic acid cycle; succinate from succinyl-CoA (ligase route): step 1/1. Its function is as follows. Succinyl-CoA synthetase functions in the citric acid cycle (TCA), coupling the hydrolysis of succinyl-CoA to the synthesis of either ATP or GTP and thus represents the only step of substrate-level phosphorylation in the TCA. The beta subunit provides nucleotide specificity of the enzyme and binds the substrate succinate, while the binding sites for coenzyme A and phosphate are found in the alpha subunit. This Mycobacterium leprae (strain Br4923) protein is Succinate--CoA ligase [ADP-forming] subunit beta.